The following is a 214-amino-acid chain: uncharacterized protein (214 aa).

2 helical membrane-spanning segments follow: residues 23-43 (ILVG…VAAA) and 65-85 (VLYA…PVLL). The disordered stretch occupies residues 96-115 (ATRPTGASVRGGRSIGSGHP). The next 2 helical transmembrane spans lie at 152–172 (VVLT…TYLM) and 181–201 (WISY…EWLY).

It is found in the cell membrane. This is an uncharacterized protein from Mycobacterium tuberculosis (strain CDC 1551 / Oshkosh).